The following is a 109-amino-acid chain: Thiosulfate sulfurtransferase GlpE (109 aa).

The Rhodanese domain maps to 17-105 (KEGKTALVDI…WARSYPQDIT (89 aa)). Cysteine 65 (cysteine persulfide intermediate) is an active-site residue.

The protein belongs to the GlpE family.

It localises to the cytoplasm. The catalysed reaction is thiosulfate + hydrogen cyanide = thiocyanate + sulfite + 2 H(+). The enzyme catalyses thiosulfate + [thioredoxin]-dithiol = [thioredoxin]-disulfide + hydrogen sulfide + sulfite + 2 H(+). Transferase that catalyzes the transfer of sulfur from thiosulfate to thiophilic acceptors such as cyanide or dithiols. May function in a CysM-independent thiosulfate assimilation pathway by catalyzing the conversion of thiosulfate to sulfite, which can then be used for L-cysteine biosynthesis. The chain is Thiosulfate sulfurtransferase GlpE from Yersinia pestis bv. Antiqua (strain Antiqua).